Consider the following 147-residue polypeptide: Ubiquitin-conjugating enzyme E2 4 (147 aa).

Positions 1–147 constitute a UBC core domain; the sequence is MALKRINREL…AREWTRKYAI (147 aa). C85 serves as the catalytic Glycyl thioester intermediate.

This sequence belongs to the ubiquitin-conjugating enzyme family. In terms of assembly, interacts with the E1 ubiquitin-activating enzyme ptr3 and E3 ubiquitin-protein ligase pub2.

It catalyses the reaction S-ubiquitinyl-[E1 ubiquitin-activating enzyme]-L-cysteine + [E2 ubiquitin-conjugating enzyme]-L-cysteine = [E1 ubiquitin-activating enzyme]-L-cysteine + S-ubiquitinyl-[E2 ubiquitin-conjugating enzyme]-L-cysteine.. Its pathway is protein modification; protein ubiquitination. Functionally, E2 ubiquitin-conjugating enzyme that catalyzes the covalent attachment of ubiquitin to other proteins. Mediates the selective degradation of short-lived and abnormal proteins. Mediates ubiquitination of pex5. The chain is Ubiquitin-conjugating enzyme E2 4 (ubc4) from Schizosaccharomyces pombe (strain 972 / ATCC 24843) (Fission yeast).